A 290-amino-acid polypeptide reads, in one-letter code: GTPase Era (290 aa).

The Era-type G domain maps to 2 to 169 (KSGFVSIIGR…KDKIYANLQE (168 aa)). Residues 10-17 (GRPSTGKS) are G1. A GTP-binding site is contributed by 10 to 17 (GRPSTGKS). The G2 stretch occupies residues 36 to 40 (QTTRN). Residues 57–60 (DTPG) are G3. Residues 57–61 (DTPGF) and 119–122 (NKID) contribute to the GTP site. Residues 119 to 122 (NKID) form a G4 region. Positions 148 to 150 (ISA) are G5. The KH type-2 domain maps to 200–276 (LKEELPYSLY…DLFLQVKLRK (77 aa)).

Belongs to the TRAFAC class TrmE-Era-EngA-EngB-Septin-like GTPase superfamily. Era GTPase family. As to quaternary structure, monomer.

The protein resides in the cytoplasm. The protein localises to the cell inner membrane. An essential GTPase that binds both GDP and GTP, with rapid nucleotide exchange. Plays a role in 16S rRNA processing and 30S ribosomal subunit biogenesis and possibly also in cell cycle regulation and energy metabolism. The protein is GTPase Era of Borrelia hermsii (strain HS1 / DAH).